The primary structure comprises 130 residues: Small ribosomal subunit protein uS8 (130 aa).

Belongs to the universal ribosomal protein uS8 family. As to quaternary structure, part of the 30S ribosomal subunit. Contacts proteins S5 and S12.

In terms of biological role, one of the primary rRNA binding proteins, it binds directly to 16S rRNA central domain where it helps coordinate assembly of the platform of the 30S subunit. This Buchnera aphidicola subsp. Acyrthosiphon kondoi (Acyrthosiphon kondoi symbiotic bacterium) protein is Small ribosomal subunit protein uS8.